The chain runs to 554 residues: uncharacterized protein (554 aa).

Disordered stretches follow at residues 1–127 (MTTH…NYND), 139–173 (IEDD…SKAG), 293–395 (NNNN…PLSE), and 416–509 (FGFS…RKIR). 3 stretches are compositionally biased toward low complexity: residues 9-30 (SSSN…NNNI), 46-55 (DPTSSSSPTN), and 63-125 (SNSN…LINY). Over residues 139 to 153 (IEDDEEYEEIGDEES) the composition is skewed to acidic residues. Polar residues predominate over residues 164–173 (NDSLNGSKAG). Composition is skewed to low complexity over residues 293–387 (NNNN…CSSN), 416–449 (FGFS…SSIS), and 461–484 (SPPL…NNNH). Over residues 485–508 (HNNHHQNHHHQNHNHQHHSKKRKI) the composition is skewed to basic residues.

This is an uncharacterized protein from Dictyostelium discoideum (Social amoeba).